A 901-amino-acid polypeptide reads, in one-letter code: Valine--tRNA ligase (901 aa).

Positions 536–540 match the 'KMSKS' region motif; that stretch reads KLSKS. An ATP-binding site is contributed by Lys-539. The stretch at 831–901 forms a coiled coil; sequence LEGLISFEKE…KLQGNLEVLS (71 aa).

Belongs to the class-I aminoacyl-tRNA synthetase family. ValS type 1 subfamily. Monomer.

It is found in the cytoplasm. It carries out the reaction tRNA(Val) + L-valine + ATP = L-valyl-tRNA(Val) + AMP + diphosphate. Functionally, catalyzes the attachment of valine to tRNA(Val). As ValRS can inadvertently accommodate and process structurally similar amino acids such as threonine, to avoid such errors, it has a 'posttransfer' editing activity that hydrolyzes mischarged Thr-tRNA(Val) in a tRNA-dependent manner. This Chlorobaculum tepidum (strain ATCC 49652 / DSM 12025 / NBRC 103806 / TLS) (Chlorobium tepidum) protein is Valine--tRNA ligase.